Here is a 127-residue protein sequence, read N- to C-terminus: Protein yippee-like 4 (127 aa).

The 98-residue stretch at 27–124 (RTYSCVHCRA…IEMSHMVKDN (98 aa)) folds into the Yippee domain. Zn(2+) is bound by residues Cys31, Cys34, Cys87, and Cys90. Phosphothreonine occurs at positions 92 and 93. Residue Tyr98 is modified to Phosphotyrosine.

Belongs to the yippee family. As to expression, detected in brain, spleen and testis.

Its subcellular location is the nucleus. It localises to the nucleolus. The polypeptide is Protein yippee-like 4 (Ypel4) (Mus musculus (Mouse)).